Reading from the N-terminus, the 351-residue chain is Photosystem II D2 protein (351 aa).

The chain crosses the membrane as a helical span at residues 39-59 (CAFLALGGWLTGTTFVTSWYT). His-116 contributes to the chlorophyll a binding site. The helical transmembrane segment at 123-139 (GFMLRQFEIARLVGIRP) threads the bilayer. Positions 128 and 141 each coordinate pheophytin a. A helical transmembrane segment spans residues 151–164 (VFVSVFLMYPLGQS). His-196 contributes to the chlorophyll a binding site. Residues 206 to 226 (GALLCAIHGATVENTLFEDGE) form a helical membrane-spanning segment. A plastoquinone-binding residues include His-213 and Phe-260. His-213 is a binding site for Fe cation. Residue His-267 coordinates Fe cation. Residues 277-293 (GLWMSAVGIVGLALNLR) traverse the membrane as a helical segment.

Belongs to the reaction center PufL/M/PsbA/D family. In terms of assembly, PSII is composed of 1 copy each of membrane proteins PsbA, PsbB, PsbC, PsbD, PsbE, PsbF, PsbH, PsbI, PsbJ, PsbK, PsbL, PsbM, PsbT, PsbX, PsbY, PsbZ, Psb30/Ycf12, peripheral proteins PsbO, CyanoQ (PsbQ), PsbU, PsbV and a large number of cofactors. It forms dimeric complexes. Requires The D1/D2 heterodimer binds P680, chlorophylls that are the primary electron donor of PSII, and subsequent electron acceptors. It shares a non-heme iron and each subunit binds pheophytin, quinone, additional chlorophylls, carotenoids and lipids. There is also a Cl(-1) ion associated with D1 and D2, which is required for oxygen evolution. The PSII complex binds additional chlorophylls, carotenoids and specific lipids. as cofactor.

It localises to the cellular thylakoid membrane. It carries out the reaction 2 a plastoquinone + 4 hnu + 2 H2O = 2 a plastoquinol + O2. Its function is as follows. Photosystem II (PSII) is a light-driven water:plastoquinone oxidoreductase that uses light energy to abstract electrons from H(2)O, generating O(2) and a proton gradient subsequently used for ATP formation. It consists of a core antenna complex that captures photons, and an electron transfer chain that converts photonic excitation into a charge separation. The D1/D2 (PsbA/PsbD) reaction center heterodimer binds P680, the primary electron donor of PSII as well as several subsequent electron acceptors. D2 is needed for assembly of a stable PSII complex. The protein is Photosystem II D2 protein of Trichormus variabilis (strain ATCC 29413 / PCC 7937) (Anabaena variabilis).